A 414-amino-acid polypeptide reads, in one-letter code: Wilms tumor protein homolog A (414 aa).

Glycyl lysine isopeptide (Lys-Gly) (interchain with G-Cter in SUMO) cross-links involve residues Lys-55 and Lys-158. A 9aaTAD motif is present at residues 217–225 (MTWNQMNLG). 3 consecutive C2H2-type zinc fingers follow at residues 288-312 (FMCAYPGCNKRYFKLSHLQMHSRKH), 318-342 (YQCDFKDCERRFSRSDQLKRHQRRH), and 348-370 (FQCKTCQRKFSRSDHLKTHTRTH). 2 important for interaction with target DNA regions span residues 332 to 346 (SDQLKRHQRRHTGIK) and 358 to 366 (SRSDHLKTH). A KTS motif motif is present at residues 373 to 375 (KTS). The segment at 379–403 (FSCRWPSCQKKFARSDELVRHHNMH) adopts a C2H2-type 4 zinc-finger fold.

This sequence belongs to the EGR C2H2-type zinc-finger protein family. Expressed around the pronephric anlage and in the pronephros; expression is restricted to the splanchnic mesoderm (the site where the glomus forms) from tailbud stages, and the glomus of early tadpoles. Not expressed in the pronephric tubules or pronephric duct. In tadpoles (stage 38-39), additional expression begins in the heart. Also expressed in the adult kidney (mesonephros).

The protein resides in the nucleus. It is found in the cytoplasm. Its subcellular location is the nucleus speckle. In terms of biological role, transcription factor required for development of the vascular component of the pronephric kidney, the glomus; may repress tubule-specific gene expression in the portion of the pronephros fated to form the glomus. Recognizes and binds to the DNA sequence 5'-GCG(T/G)GGGCG-3'. Inhibits Wnt-signaling during embryonic development. Function may be isoform-specific: the isoform containing the KTS motif is less effective in inhibiting wnt signaling. The chain is Wilms tumor protein homolog A (wt1-a) from Xenopus laevis (African clawed frog).